Here is a 106-residue protein sequence, read N- to C-terminus: Small ribosomal subunit protein uS10 (106 aa).

The protein belongs to the universal ribosomal protein uS10 family. In terms of assembly, part of the 30S ribosomal subunit.

Functionally, involved in the binding of tRNA to the ribosomes. This is Small ribosomal subunit protein uS10 from Wolbachia pipientis subsp. Culex pipiens (strain wPip).